Here is a 417-residue protein sequence, read N- to C-terminus: Tryptophan decarboxylase (417 aa).

Residue Lys-263 is modified to N6-(pyridoxal phosphate)lysine.

It belongs to the group II decarboxylase family. It depends on pyridoxal 5'-phosphate as a cofactor.

It is found in the cytoplasm. The catalysed reaction is L-tryptophan + H(+) = tryptamine + CO2. Inhibited by (S)-alpha-fluoromethyltryptophan. Functionally, catalyzes the decarboxylation of tryptophan to tryptamine. Tryptamine is a neurotransmitter that induces the release of serotonin, which is suggested to modulate gastrointestinal motility. Therefore, the tryptophan decarboxylase from the gut bacteria Clostridium sporogenes (strain ATCC 15579) may influence host brain and behavior. Has weak activity with tyrosine. Activity against phenylalanine is undetectable. This is Tryptophan decarboxylase from Clostridium sporogenes (strain ATCC 15579).